The following is a 1135-amino-acid chain: Retinoblastoma-like protein 2 (1135 aa).

Positions 1 to 43 (MASGGNQSSPPPPAAAASSEEEEEDGDTADRAQPAGSPSHQIQ) are disordered. Phosphoserine is present on S410. T414 bears the Phosphothreonine mark. The tract at residues 414–613 (TPVSTATHSL…DRIRDNENRV (200 aa)) is domain A. The segment at 414-1021 (TPVSTATHSL…QTFAMKYSQA (608 aa)) is pocket; binds E1A. An O-linked (GlcNAc) serine glycan is attached at S417. The segment at 614–824 (PTCEEVTPPH…QGQPLTSSSI (211 aa)) is spacer. S636 is modified (phosphoserine). T639 is modified (phosphothreonine). Disordered regions lie at residues 649 to 698 (DAGG…PPQP), 806 to 825 (ISPG…SSIR), and 932 to 995 (RRNS…EEEE). Residues 656–674 (SVTSPTTLYDRYSSPTVST) are compositionally biased toward polar residues. Residues S659, S669, and S684 each carry the phosphoserine modification. Residues 806-818 (ISPGGQQQNQGQP) show a composition bias toward low complexity. A domain B region spans residues 825 to 1021 (RPRKTSSLSL…QTFAMKYSQA (197 aa)). Polar residues-rich tracts occupy residues 935 to 950 (SGSC…PTEL) and 958 to 969 (DSSPVMRSNSTL). S942, S946, S960, S965, and S967 each carry phosphoserine. Residue T968 is modified to Phosphothreonine. The span at 971 to 981 (VPQPSSAPPTP) shows a compositional bias: pro residues. Phosphoserine occurs at positions 975 and 976. Position 980 is a phosphothreonine (T980). 4 positions are modified to phosphoserine: S1031, S1064, S1076, and S1108.

Belongs to the retinoblastoma protein (RB) family. In terms of assembly, interacts with AATF, KMT5B and KMT5C. Component of the DREAM complex (also named LINC complex) at least composed of E2F4, E2F5, LIN9, LIN37, LIN52, LIN54, MYBL1, MYBL2, RBL1, RBL2, RBBP4, TFDP1 and TFDP2. The complex exists in quiescent cells where it represses cell cycle-dependent genes. It dissociates in S phase when LIN9, LIN37, LIN52 and LIN54 form a subcomplex that binds to MYBL2. Interacts with USP4. Part of the peroxisome proliferator activated receptor alpha (PPAR-alpha) interacting complex (PRIC). Interacts with RINT1. Interacts with PML. Interacts with RBBP9. Interacts with CD53. During G0 and early G1 phase of the cell cycle, phosphorylated on Ser-636 and on 5 sites within the domain B. Phosphorylation on Ser-669 in G1 leads to its ubiquitin-dependent proteolysis.

Its subcellular location is the nucleus. Its function is as follows. Key regulator of entry into cell division. Directly involved in heterochromatin formation by maintaining overall chromatin structure and, in particular, that of constitutive heterochromatin by stabilizing histone methylation. Recruits and targets histone methyltransferases KMT5B and KMT5C, leading to epigenetic transcriptional repression. Controls histone H4 'Lys-20' trimethylation. Probably acts as a transcription repressor by recruiting chromatin-modifying enzymes to promoters. Potent inhibitor of E2F-mediated trans-activation, associates preferentially with E2F5. Binds to cyclins A and E. Binds to and may be involved in the transforming capacity of the adenovirus E1A protein. May act as a tumor suppressor. The sequence is that of Retinoblastoma-like protein 2 (Rbl2) from Rattus norvegicus (Rat).